Here is a 62-residue protein sequence, read N- to C-terminus: Large ribosomal subunit protein bL28 (62 aa).

The protein belongs to the bacterial ribosomal protein bL28 family.

This chain is Large ribosomal subunit protein bL28, found in Thermobifida fusca (strain YX).